The chain runs to 671 residues: UvrABC system protein B (671 aa).

In terms of domain architecture, Helicase ATP-binding spans 25-412; sequence EGIEAGLAHQ…AGRVVEQVVR (388 aa). Residue 38–45 participates in ATP binding; that stretch reads GVTGSGKT. Residues 91–114 carry the Beta-hairpin motif; the sequence is YYDYYQPEAYVPSSDTFIEKDASI. Residues 429–582 form the Helicase C-terminal domain; sequence QVDDLLSEIT…QIAFNLANGI (154 aa). Residues 601 to 623 form a disordered region; sequence PGSRSKKRKGMAKAAEENARYEN. The segment covering 614–623 has biased composition (basic and acidic residues); sequence AAEENARYEN. A UVR domain is found at 632–667; the sequence is TKRIRQLEEKMYQLARDLEFEAAAQMRDEITKLRER.

Belongs to the UvrB family. As to quaternary structure, forms a heterotetramer with UvrA during the search for lesions. Interacts with UvrC in an incision complex.

It localises to the cytoplasm. Functionally, the UvrABC repair system catalyzes the recognition and processing of DNA lesions. A damage recognition complex composed of 2 UvrA and 2 UvrB subunits scans DNA for abnormalities. Upon binding of the UvrA(2)B(2) complex to a putative damaged site, the DNA wraps around one UvrB monomer. DNA wrap is dependent on ATP binding by UvrB and probably causes local melting of the DNA helix, facilitating insertion of UvrB beta-hairpin between the DNA strands. Then UvrB probes one DNA strand for the presence of a lesion. If a lesion is found the UvrA subunits dissociate and the UvrB-DNA preincision complex is formed. This complex is subsequently bound by UvrC and the second UvrB is released. If no lesion is found, the DNA wraps around the other UvrB subunit that will check the other stand for damage. In Pseudomonas fluorescens (strain ATCC BAA-477 / NRRL B-23932 / Pf-5), this protein is UvrABC system protein B.